The sequence spans 87 residues: MEVIADRLDDIVKQNIADEKFVDFVIHGLEHQCPAILRPLIRLFIDILLFVIVIYIFTVRLVSRNYQMLLALLALVISLTIFYYFIL.

Helical transmembrane passes span 39–59 and 67–87; these read PLIR…IFTV and QMLL…YFIL.

The protein belongs to the orthopoxvirus OPG096 family. As to quaternary structure, interacts with OPG158.

The protein resides in the virion membrane. It is found in the host cytoplasm. Its subcellular location is the host endoplasmic reticulum membrane. In terms of biological role, early protein involved in virion morphogenesis. Participates in the formation and elongation of crescent-shaped membrane precursors of immature virions in cytoplasmic factories. The protein is Protein OPG096 (OPG096) of Homo sapiens (Human).